The primary structure comprises 484 residues: Membrane-bound lytic murein transglycosylase F (484 aa).

Positions 1-18 (MKGLLLRIIAAFALVLWA) are cleaved as a signal peptide. Positions 19–267 (IDMVFPWQQM…RIEEKYFNHF (249 aa)) are non-LT domain. The LT domain stretch occupies residues 268-484 (SQFDYVDMRQ…PLTDNQEKQE (217 aa)). Glu-312 is a catalytic residue. A disordered region spans residues 459–484 (ADNKDKPSETDENLPLPLTDNQEKQE).

The protein in the N-terminal section; belongs to the bacterial solute-binding protein 3 family. This sequence in the C-terminal section; belongs to the transglycosylase Slt family.

It localises to the cell outer membrane. It carries out the reaction Exolytic cleavage of the (1-&gt;4)-beta-glycosidic linkage between N-acetylmuramic acid (MurNAc) and N-acetylglucosamine (GlcNAc) residues in peptidoglycan, from either the reducing or the non-reducing ends of the peptidoglycan chains, with concomitant formation of a 1,6-anhydrobond in the MurNAc residue.. Murein-degrading enzyme that degrades murein glycan strands and insoluble, high-molecular weight murein sacculi, with the concomitant formation of a 1,6-anhydromuramoyl product. Lytic transglycosylases (LTs) play an integral role in the metabolism of the peptidoglycan (PG) sacculus. Their lytic action creates space within the PG sacculus to allow for its expansion as well as for the insertion of various structures such as secretion systems and flagella. The chain is Membrane-bound lytic murein transglycosylase F from Mannheimia succiniciproducens (strain KCTC 0769BP / MBEL55E).